The following is a 348-amino-acid chain: Centromere protein N (348 aa).

It belongs to the CENP-N/CHL4 family.

The protein resides in the nucleus. It localises to the chromosome. Its subcellular location is the centromere. Functionally, probable component of a centromeric complex involved in assembly of kinetochore proteins, mitotic progression and chromosome segregation. The chain is Centromere protein N (cenpn) from Xenopus tropicalis (Western clawed frog).